Consider the following 148-residue polypeptide: MAESDWDTVTVLRKKGPTAAQAKSKQAILAAQRRGEDVETSKKWAAGQNKQHSITKNTAKLDRETEELHHDRVTLEVGKVIQRGRQSKGLTQKDLATKINEKPQVIADYESGRAIPNNQVLGKIERAIGLKLRGKDIGKPIEKGPKAK.

Ala-2 bears the N-acetylalanine mark. Residue Ser-4 is modified to Phosphoserine. Lys-25 carries the N6-methyllysine modification. The disordered stretch occupies residues 34–67 (RGEDVETSKKWAAGQNKQHSITKNTAKLDRETEE). The interval 37-113 (DVETSKKWAA…QVIADYESGR (77 aa)) is interaction with NR5A2, PPARG and NR1H3. Positions 48–58 (QNKQHSITKNT) are enriched in polar residues. The segment at 69–108 (HHDRVTLEVGKVIQRGRQSKGLTQKDLATKINEKPQVIAD) is interaction with TBP and NR5A1. Residues 81-88 (IQRGRQSK) carry the IQ motif motif. In terms of domain architecture, HTH cro/C1-type spans 81 to 135 (IQRGRQSKGLTQKDLATKINEKPQVIADYESGRAIPNNQVLGKIERAIGLKLRGK). Positions 92–111 (QKDLATKINEKPQVIADYES) form a DNA-binding region, H-T-H motif.

In terms of assembly, interacts with TBP and the transcription factor IID (TFIID) complex, NR5A2, NR1H3 and PPARG. Interaction with TBP is regulated by phosphorylation. Binds NR5A1, ATF1, FOS and JUN via their conserved basic region. Binding to calmodulin is regulated by calcium and phosphorylation of the IQ motif. Post-translationally, phosphorylated. In terms of tissue distribution, expressed in brain, liver, kidney and heart (at protein level). Also expressed in testis.

The protein localises to the cytoplasm. It localises to the nucleus. In terms of biological role, transcriptional coactivator stimulating NR5A1 and ligand-dependent NR1H3/LXRA and PPARG transcriptional activities. Enhances the DNA-binding activity of ATF1, ATF2, CREB1 and NR5A1. Regulates nitric oxid synthase activity probably by sequestering calmodulin in the cytoplasm. Might function in endothelial cells differentiation, hormone-induced cardiomyocytes hypertrophy and lipid metabolism. The protein is Endothelial differentiation-related factor 1 (Edf1) of Mus musculus (Mouse).